The sequence spans 157 residues: Mannose-specific lectin (157 aa).

A signal peptide (or 23; in 70% of the molecules) is located at residues Met1–Pro19. A Bulb-type lectin domain is found at Asp24–Gly132. Alpha-D-mannopyranose-binding residues include Gln49, Asp51, Asn53, Tyr57, Asp60, Lys61, Trp64, Ala65, Asn67, Gln80, Asp82, Asn84, Tyr88, Ile95, Trp96, Asn99, Asn106, Gln112, Asp114, Asn116, Tyr120, and Trp125. A disulfide bond links Cys52 and Cys75. Residues Thr129–Lys157 constitute a propeptide, removed in mature form.

In terms of assembly, homotetramer.

It localises to the secreted. Functionally, mannose-specific lectin which binds alpha-D-linked mannose. Displays a high affinity for alpha-(1-3)-mannose oligomers. Displays antiviral activity and therefore may contribute to defense against infections. In Galanthus nivalis (Common snowdrop), this protein is Mannose-specific lectin.